We begin with the raw amino-acid sequence, 112 residues long: uncharacterized protein (112 aa).

Residues 85 to 105 (IVQLIILFAIIITNPNAIELI) form a helical membrane-spanning segment.

This sequence belongs to the M.jannaschii MJ0023/MJ0349/MJ1072/MJ1074/MJ1107/MJECL16 family.

The protein resides in the membrane. This is an uncharacterized protein from Methanocaldococcus jannaschii (strain ATCC 43067 / DSM 2661 / JAL-1 / JCM 10045 / NBRC 100440) (Methanococcus jannaschii).